Consider the following 691-residue polypeptide: Histone-lysine N-methyltransferase Set8 (691 aa).

Positions 1-29 are disordered; it reads MIMVRRRQRPAKEAASSSSGGASSGSGIP. The span at 14 to 27 shows a compositional bias: low complexity; it reads AASSSSGGASSGSG. 2 positions are modified to phosphoserine: serine 195 and serine 250. At threonine 252 the chain carries Phosphothreonine. Phosphoserine is present on serine 281. 4 disordered regions span residues 341–363, 382–401, 407–437, and 464–516; these read TANT…HRIL, GSAD…TTTA, KSRR…QQQQ, and AEER…ATNG. Threonine 344 is subject to Phosphothreonine. Phosphoserine occurs at positions 346, 383, 388, and 392. Polar residues-rich tracts occupy residues 421–430 and 471–481; these read YQPQLQKPPS and NKAPATANSNK. Positions 555–676 constitute an SET domain; that stretch reads DGLQVRHFMG…PGEELTYDYG (122 aa). S-adenosyl-L-methionine contacts are provided by residues 565 to 567, tyrosine 610, and 637 to 638; these read KGR and NH.

This sequence belongs to the class V-like SAM-binding methyltransferase superfamily. Histone-lysine methyltransferase family. PR/SET subfamily.

Its subcellular location is the nucleus. It localises to the chromosome. The catalysed reaction is L-lysyl(20)-[histone H4] + S-adenosyl-L-methionine = N(6)-methyl-L-lysyl(20)-[histone H4] + S-adenosyl-L-homocysteine + H(+). Its function is as follows. Histone methyltransferase that specifically monomethylates 'Lys-20' of histone H4. H4 'Lys-20' monomethylation is enriched during mitosis and represents a specific tag for epigenetic transcriptional repression. Mainly functions in euchromatin regions, thereby playing a central role in the silencing of euchromatic genes. Required for cell proliferation, possibly by contributing to the maintenance of proper higher-order structure of DNA and chromosome condensation during mitosis. This Drosophila melanogaster (Fruit fly) protein is Histone-lysine N-methyltransferase Set8.